The primary structure comprises 107 residues: Thiosulfate sulfurtransferase GlpE (107 aa).

The Rhodanese domain maps to 19–107; that stretch reads QDLNAVLVDI…WHKAGLPVEK (89 aa). Catalysis depends on C67, which acts as the Cysteine persulfide intermediate.

Belongs to the GlpE family.

It is found in the cytoplasm. The catalysed reaction is thiosulfate + hydrogen cyanide = thiocyanate + sulfite + 2 H(+). The enzyme catalyses thiosulfate + [thioredoxin]-dithiol = [thioredoxin]-disulfide + hydrogen sulfide + sulfite + 2 H(+). Transferase that catalyzes the transfer of sulfur from thiosulfate to thiophilic acceptors such as cyanide or dithiols. May function in a CysM-independent thiosulfate assimilation pathway by catalyzing the conversion of thiosulfate to sulfite, which can then be used for L-cysteine biosynthesis. The chain is Thiosulfate sulfurtransferase GlpE from Aliivibrio fischeri (strain MJ11) (Vibrio fischeri).